Consider the following 247-residue polypeptide: UDP-2,3-diacylglucosamine hydrolase (247 aa).

Positions 8, 10, 41, 79, and 114 each coordinate Mn(2+). A substrate-binding site is contributed by 79–80 (NR). Residues Asp-122, Ser-160, Asp-171, Gln-174, and His-202 each coordinate substrate. The Mn(2+) site is built by His-202 and His-204.

Belongs to the LpxH family. Mn(2+) serves as cofactor.

The protein resides in the cell inner membrane. The catalysed reaction is UDP-2-N,3-O-bis[(3R)-3-hydroxytetradecanoyl]-alpha-D-glucosamine + H2O = 2-N,3-O-bis[(3R)-3-hydroxytetradecanoyl]-alpha-D-glucosaminyl 1-phosphate + UMP + 2 H(+). It participates in glycolipid biosynthesis; lipid IV(A) biosynthesis; lipid IV(A) from (3R)-3-hydroxytetradecanoyl-[acyl-carrier-protein] and UDP-N-acetyl-alpha-D-glucosamine: step 4/6. In terms of biological role, hydrolyzes the pyrophosphate bond of UDP-2,3-diacylglucosamine to yield 2,3-diacylglucosamine 1-phosphate (lipid X) and UMP by catalyzing the attack of water at the alpha-P atom. Involved in the biosynthesis of lipid A, a phosphorylated glycolipid that anchors the lipopolysaccharide to the outer membrane of the cell. This Xanthomonas campestris pv. campestris (strain 8004) protein is UDP-2,3-diacylglucosamine hydrolase.